The following is a 186-amino-acid chain: Auxin-responsive protein IAA4 (186 aa).

The EAR-like (transcriptional repression) signature appears at 18-22; that stretch reads LRLGL. The disordered stretch occupies residues 25–62; it reads TEETVSCGKSNKRVLPEATEKEIESTGKTETASPPKAQ. Residues 38-51 are compositionally biased toward basic and acidic residues; sequence VLPEATEKEIESTG. Positions 88–175 constitute a PB1 domain; it reads GNYVKVSMDG…SCKRLRIMKG (88 aa).

The protein belongs to the Aux/IAA family. Homodimers and heterodimers. Interacts with TPL. Preferentially expressed in stems, leaves and flowers.

It localises to the nucleus. In terms of biological role, aux/IAA proteins are short-lived transcriptional factors that function as repressors of early auxin response genes at low auxin concentrations. Repression is thought to result from the interaction with auxin response factors (ARFs), proteins that bind to the auxin-responsive promoter element (AuxRE). Formation of heterodimers with ARF proteins may alter their ability to modulate early auxin response genes expression. The chain is Auxin-responsive protein IAA4 (IAA4) from Arabidopsis thaliana (Mouse-ear cress).